Reading from the N-terminus, the 831-residue chain is Multiphosphoryl transfer protein (831 aa).

The HPr domain maps to 1 to 90 (MLTIQFLCPL…EYIQVRFIDS (90 aa)). His-15 acts as the Pros-phosphohistidine intermediate; for HPr activity in catalysis. At His-15 the chain carries Phosphohistidine; by EI. The PTS EI stretch occupies residues 119-650 (GNVLASGVGV…AVKSQLRQLD (532 aa)). His-298 (tele-phosphohistidine intermediate; for PTS EI activity) is an active-site residue. His-298 carries the post-translational modification Phosphohistidine; by autocatalysis. Residues Arg-405 and Arg-441 each contribute to the phosphoenolpyruvate site. Positions 540 and 564 each coordinate Mg(2+). Residues 563-564 (ND) and Arg-574 contribute to the phosphoenolpyruvate site. Catalysis depends on Cys-611, which acts as the Proton donor; for EI activity. The region spanning 685–828 (PLLALENIFV…QSILTLLETE (144 aa)) is the PTS EIIA type-2 domain. His-747 functions as the Tele-phosphohistidine intermediate; for PTS EIIA activity in the catalytic mechanism. His-747 carries the post-translational modification Phosphohistidine; by HPr.

It belongs to the PEP-utilizing enzyme family. Requires Mg(2+) as cofactor.

It localises to the cytoplasm. It carries out the reaction L-histidyl-[protein] + phosphoenolpyruvate = N(pros)-phospho-L-histidyl-[protein] + pyruvate. The catalysed reaction is D-fructose(out) + N(pros)-phospho-L-histidyl-[protein] = D-fructose 1-phosphate(in) + L-histidyl-[protein]. In terms of biological role, multifunctional protein that includes general (non sugar-specific) and sugar-specific components of the phosphoenolpyruvate-dependent sugar phosphotransferase system (sugar PTS). This major carbohydrate active transport system catalyzes the phosphorylation of incoming sugar substrates concomitantly with their translocation across the cell membrane. The enzyme II FryABC PTS system is involved in fructose transport. This Escherichia coli O6:H1 (strain CFT073 / ATCC 700928 / UPEC) protein is Multiphosphoryl transfer protein (fryA).